Here is a 751-residue protein sequence, read N- to C-terminus: Proton-associated sugar transporter A (751 aa).

The next 6 helical transmembrane spans lie at 93-113 (ILFG…PVLL), 123-143 (SLVW…LGAW), 155-175 (RPFI…LLNG), 191-211 (WGIL…DSAD), 233-253 (IHAL…GIHW), and 268-288 (VIYI…LVSI). Threonine 500 carries the phosphothreonine modification. A run of 6 helical transmembrane segments spans residues 536–556 (GWLS…EVVF), 576–596 (VTMG…YSAI), 606–626 (VRTL…LATL), 630–650 (LYVV…LCTL), 688–708 (FLAQ…VGSA), and 710–730 (GVMY…SLCV).

It belongs to the glycoside-pentoside-hexuronide (GPH) cation symporter transporter (TC 2.A.2) family. Predominantly expressed in brain.

Its subcellular location is the membrane. It catalyses the reaction D-galactose(in) + H(+)(in) = D-galactose(out) + H(+)(out). The enzyme catalyses D-glucose(out) + H(+)(out) = D-glucose(in) + H(+)(in). Functionally, proton-associated glucose transporter in the brain. The polypeptide is Proton-associated sugar transporter A (Rattus norvegicus (Rat)).